The following is a 986-amino-acid chain: E3 ubiquitin-protein ligase Arkadia (986 aa).

Residues K19, K28, K34, K47, K59, K73, K87, K96, and K110 each participate in a glycyl lysine isopeptide (Lys-Gly) (interchain with G-Cter in SUMO2) cross-link. Residues 66 to 89 (HLCDDSQKQEKDMNGNQQEQEKSL) are compositionally biased toward basic and acidic residues. Residues 66 to 106 (HLCDDSQKQEKDMNGNQQEQEKSLVVRKKRKSQQAGPSYVQ) form a disordered region. A disordered region spans residues 120–191 (QHLGTPSDED…HKWPRTETES (72 aa)). Positions 132–151 (SSFSDCLSSPSSSLHFGDSD) are enriched in low complexity. The segment covering 164–173 (RHSQTILNAK) has biased composition (polar residues). K173 participates in a covalent cross-link: Glycyl lysine isopeptide (Lys-Gly) (interchain with G-Cter in SUMO2). Residues 174–184 (SRSHSARSHKW) show a composition bias toward basic residues. Residues K198 and K218 each participate in a glycyl lysine isopeptide (Lys-Gly) (interchain with G-Cter in SUMO2) cross-link. Residues 241 to 404 (VLARRKYALL…VPTTSARMES (164 aa)) form an interaction with AXIN1 region. A disordered region spans residues 248–277 (ALLPSSSSSSENDLSSESSSSSSTEGEEDL). A compositionally biased stretch (low complexity) spans 252 to 271 (SSSSSSENDLSSESSSSSST). The short motif at 300-304 (VVVIE) is the SUMO interaction motif 1 (SIM) element. The SUMO interaction motif 2 (SIM) signature appears at 325–331 (EVEIVTV). The tract at residues 337-373 (SRSTLGHSRSHWSQGSSSHASRPQEPRNRSRISTVIQ) is disordered. Residues 347 to 357 (HWSQGSSSHAS) show a composition bias toward low complexity. Residues 382-386 (VVDLT) carry the SUMO interaction motif 3 (SIM) motif. 5 disordered regions span residues 389–471 (EDEP…ETGP), 506–561 (QQHG…SYHE), 610–646 (APSQ…RHYM), 659–684 (HQAS…VDYV), and 696–719 (ISSH…TAAP). Residues 395–466 (VPTTSARMES…DSRRTTSSAV (72 aa)) are compositionally biased toward polar residues. The segment covering 508-522 (HGHHFQHHHHHHHTP) has biased composition (basic residues). Residues 551 to 561 (ANSSSGTSYHE) show a composition bias toward polar residues. The span at 670-680 (NPPPQTQPPPQ) shows a compositional bias: pro residues. Positions 907–909 (YPH) are ubiquitin binding. Residues K915 and K919 each participate in a glycyl lysine isopeptide (Lys-Gly) (interchain with G-Cter in SUMO2) cross-link. Zn(2+)-binding residues include C934 and C937. The segment at 934–975 (CTICLSILEEGEDVRRLPCMHLFHQVCVDQWLITNKKCPICR) adopts an RING-type; atypical zinc-finger fold. The tract at residues 949-953 (RLPCM) is ubiquitin binding. Residues H957 and C960 each coordinate Zn(2+).

Belongs to the Arkadia family. In terms of assembly, monomer. Interacts with SMAD6, SMAD7, AXIN1, AXIN2 and SKIL isoform SNON. Interacts with (phosphorylated) SMAD2 and SMAD3. Part of a complex containing RNF111, AXIN1 and SMAD7. Interacts (via SIM domains) with SUMO1 and SUMO2.

It localises to the nucleus. Its subcellular location is the cytoplasm. It is found in the PML body. The enzyme catalyses S-ubiquitinyl-[E2 ubiquitin-conjugating enzyme]-L-cysteine + [acceptor protein]-L-lysine = [E2 ubiquitin-conjugating enzyme]-L-cysteine + N(6)-ubiquitinyl-[acceptor protein]-L-lysine.. It functions in the pathway protein modification; protein ubiquitination. Binds free ubiquitin non-covalently via its RING-type zinc finger. Ubiquitin-binding leads to enhance the E3 ubiquitin-protein ligase activity by stabilizing the ubiquitin-conjugating enzyme E2 (donor ubiquitin) in the 'closed' conformation and activating ubiquitin transfer. E3 ubiquitin-protein ligase. Required for mesoderm patterning during embryonic development. Acts as an enhancer of the transcriptional responses of the SMAD2/SMAD3 effectors, which are activated downstream of BMP. Acts by mediating ubiquitination and degradation of SMAD inhibitors such as SMAD7, inducing their proteasomal degradation and thereby enhancing the transcriptional activity of TGF-beta and BMP. In addition to enhance transcription of SMAD2/SMAD3 effectors, also regulates their turnover by mediating their ubiquitination and subsequent degradation, coupling their activation with degradation, thereby ensuring that only effectors 'in use' are degraded. Activates SMAD3/SMAD4-dependent transcription by triggering signal-induced degradation of SNON isoform of SKIL. Associates with UBE2D2 as an E2 enzyme. Specifically binds polysumoylated chains via SUMO interaction motifs (SIMs) and mediates ubiquitination of sumoylated substrates. Catalyzes 'Lys-63'-linked ubiquitination of sumoylated XPC in response to UV irradiation, promoting nucleotide excision repair. Mediates ubiquitination and degradation of sumoylated PML. The regulation of the BMP-SMAD signaling is however independent of sumoylation and is not dependent of SUMO interaction motifs (SIMs). This chain is E3 ubiquitin-protein ligase Arkadia (RNF111), found in Pongo abelii (Sumatran orangutan).